Here is a 104-residue protein sequence, read N- to C-terminus: Large ribosomal subunit protein uL23 (104 aa).

The protein belongs to the universal ribosomal protein uL23 family. Part of the 50S ribosomal subunit. Contacts protein L29, and trigger factor when it is bound to the ribosome.

In terms of biological role, one of the early assembly proteins it binds 23S rRNA. One of the proteins that surrounds the polypeptide exit tunnel on the outside of the ribosome. Forms the main docking site for trigger factor binding to the ribosome. This is Large ribosomal subunit protein uL23 from Ralstonia pickettii (strain 12J).